A 219-amino-acid chain; its full sequence is GTP-binding protein drn-1 (219 aa).

Residues 37–44 (GAGGVGKS), 56–62 (NENYVPT), 85–89 (DTTGS), 146–149 (NKKD), and 177–178 (AK) contribute to the GTP site. Positions 59 to 67 (YVPTIEDTY) match the Effector region motif. A Cysteine methyl ester modification is found at cysteine 216. A lipid anchor (S-geranylgeranyl cysteine) is attached at cysteine 216. Residues 217 to 219 (HIM) constitute a propeptide, removed in mature form.

Belongs to the small GTPase superfamily. Di-Ras family. In terms of assembly, interacts with epac-1 (via C-terminus). As to expression, expressed specifically in neurons including the nerve ring, ventral and dorsal nerve cord motor neurons and tail ganglia.

It localises to the cell membrane. Functionally, displays low GTPase activity and exists predominantly in the GTP-bound form. Together with epac-1, may regulate acetylcholine release at the neuromuscular junctions probably downstream of G-protein gsa-1 and adenylate cyclase acy-1. The polypeptide is GTP-binding protein drn-1 (Caenorhabditis elegans).